Reading from the N-terminus, the 380-residue chain is UDP-3-O-acylglucosamine N-acyltransferase (380 aa).

Catalysis depends on His263, which acts as the Proton acceptor.

The protein belongs to the transferase hexapeptide repeat family. LpxD subfamily. As to quaternary structure, homotrimer.

The catalysed reaction is a UDP-3-O-[(3R)-3-hydroxyacyl]-alpha-D-glucosamine + a (3R)-hydroxyacyl-[ACP] = a UDP-2-N,3-O-bis[(3R)-3-hydroxyacyl]-alpha-D-glucosamine + holo-[ACP] + H(+). It participates in bacterial outer membrane biogenesis; LPS lipid A biosynthesis. Functionally, catalyzes the N-acylation of UDP-3-O-acylglucosamine using 3-hydroxyacyl-ACP as the acyl donor. Is involved in the biosynthesis of lipid A, a phosphorylated glycolipid that anchors the lipopolysaccharide to the outer membrane of the cell. This Rhodopirellula baltica (strain DSM 10527 / NCIMB 13988 / SH1) protein is UDP-3-O-acylglucosamine N-acyltransferase.